Consider the following 620-residue polypeptide: Dihydroxy-acid dehydratase (620 aa).

Asp-82 contributes to the Mg(2+) binding site. Cys-123 is a binding site for [2Fe-2S] cluster. Residues Asp-124 and Lys-125 each contribute to the Mg(2+) site. Lys-125 is subject to N6-carboxylysine. [2Fe-2S] cluster is bound at residue Cys-197. Residue Glu-493 participates in Mg(2+) binding. Ser-519 (proton acceptor) is an active-site residue.

Belongs to the IlvD/Edd family. Homodimer. [2Fe-2S] cluster serves as cofactor. It depends on Mg(2+) as a cofactor.

The catalysed reaction is (2R)-2,3-dihydroxy-3-methylbutanoate = 3-methyl-2-oxobutanoate + H2O. It carries out the reaction (2R,3R)-2,3-dihydroxy-3-methylpentanoate = (S)-3-methyl-2-oxopentanoate + H2O. Its pathway is amino-acid biosynthesis; L-isoleucine biosynthesis; L-isoleucine from 2-oxobutanoate: step 3/4. It participates in amino-acid biosynthesis; L-valine biosynthesis; L-valine from pyruvate: step 3/4. In terms of biological role, functions in the biosynthesis of branched-chain amino acids. Catalyzes the dehydration of (2R,3R)-2,3-dihydroxy-3-methylpentanoate (2,3-dihydroxy-3-methylvalerate) into 2-oxo-3-methylpentanoate (2-oxo-3-methylvalerate) and of (2R)-2,3-dihydroxy-3-methylbutanoate (2,3-dihydroxyisovalerate) into 2-oxo-3-methylbutanoate (2-oxoisovalerate), the penultimate precursor to L-isoleucine and L-valine, respectively. The polypeptide is Dihydroxy-acid dehydratase (Bifidobacterium longum subsp. infantis (strain ATCC 15697 / DSM 20088 / JCM 1222 / NCTC 11817 / S12)).